The chain runs to 345 residues: Phosphoribosylformylglycinamidine cyclo-ligase (345 aa).

Belongs to the AIR synthase family.

Its subcellular location is the cytoplasm. It catalyses the reaction 2-formamido-N(1)-(5-O-phospho-beta-D-ribosyl)acetamidine + ATP = 5-amino-1-(5-phospho-beta-D-ribosyl)imidazole + ADP + phosphate + H(+). It participates in purine metabolism; IMP biosynthesis via de novo pathway; 5-amino-1-(5-phospho-D-ribosyl)imidazole from N(2)-formyl-N(1)-(5-phospho-D-ribosyl)glycinamide: step 2/2. The sequence is that of Phosphoribosylformylglycinamidine cyclo-ligase from Mannheimia succiniciproducens (strain KCTC 0769BP / MBEL55E).